Reading from the N-terminus, the 452-residue chain is MSRDTIVAQATPIGRGGVGILRVSGPLAQQVAEQVLGKTLTPRMANYLPFKDSDGSVLDQGIALYFKAPNSFTGENVLELQGHGGQIVMDLLLKRILQIDGIRLARPGEFSEQAFLNDKLDLAQAEAIADLIEASSEQAARSALKSLQGEFSNKINELVDSVIYLRTYVEAAIDFPDEEIDFLADGKIETHLREIIAKLAKVKNEAKQGAILREGMKVVIAGRPNAGKSSLLNTLAGREAAIVTDIAGTTRDVLREHIHIDGMPLHIIDTAGLRDATDEVEKIGIRRAWDEIEQADRILLILDSTENQVELDLVRSEFMAKLPPHIPLTIVRNKADLSGEAEVLNEQNGLTVISLSAKTQKGVDLLRQHLKQSMGYQVCTEGGFLARRRHLEALEQADIHLQAGLIQLTEFYAGELVAEELRIVQHHLSEITGQFTSDDLLGNIFSSFCIGK.

(6S)-5-formyl-5,6,7,8-tetrahydrofolate contacts are provided by Arg22, Glu79, and Lys119. In terms of domain architecture, TrmE-type G spans 215–375; that stretch reads GMKVVIAGRP…LRQHLKQSMG (161 aa). Asn225 provides a ligand contact to K(+). GTP-binding positions include 225–230, 244–250, 269–272, and 333–336; these read NAGKSS, TDIAGTT, DTAG, and NKAD. Ser229 contributes to the Mg(2+) binding site. Residues Thr244, Ile246, and Thr249 each coordinate K(+). Thr250 serves as a coordination point for Mg(2+). Lys452 contacts (6S)-5-formyl-5,6,7,8-tetrahydrofolate.

The protein belongs to the TRAFAC class TrmE-Era-EngA-EngB-Septin-like GTPase superfamily. TrmE GTPase family. In terms of assembly, homodimer. Heterotetramer of two MnmE and two MnmG subunits. The cofactor is K(+).

The protein resides in the cytoplasm. Its function is as follows. Exhibits a very high intrinsic GTPase hydrolysis rate. Involved in the addition of a carboxymethylaminomethyl (cmnm) group at the wobble position (U34) of certain tRNAs, forming tRNA-cmnm(5)s(2)U34. The chain is tRNA modification GTPase MnmE from Histophilus somni (strain 2336) (Haemophilus somnus).